Here is a 193-residue protein sequence, read N- to C-terminus: Ribosomal RNA small subunit methyltransferase G (193 aa).

Residues Gly-62, Phe-67, 111–112 (IE), and Arg-125 contribute to the S-adenosyl-L-methionine site.

It belongs to the methyltransferase superfamily. RNA methyltransferase RsmG family.

It is found in the cytoplasm. The catalysed reaction is guanosine(527) in 16S rRNA + S-adenosyl-L-methionine = N(7)-methylguanosine(527) in 16S rRNA + S-adenosyl-L-homocysteine. In terms of biological role, specifically methylates the N7 position of guanine in position 527 of 16S rRNA. This is Ribosomal RNA small subunit methyltransferase G from Gluconobacter oxydans (strain 621H) (Gluconobacter suboxydans).